Reading from the N-terminus, the 118-residue chain is Large ribosomal subunit protein uL24 (118 aa).

The protein belongs to the universal ribosomal protein uL24 family. Part of the 50S ribosomal subunit.

Functionally, one of two assembly initiator proteins, it binds directly to the 5'-end of the 23S rRNA, where it nucleates assembly of the 50S subunit. Its function is as follows. One of the proteins that surrounds the polypeptide exit tunnel on the outside of the subunit. In Parasynechococcus marenigrum (strain WH8102), this protein is Large ribosomal subunit protein uL24.